The sequence spans 639 residues: Polyvinylalcohol dehydrogenase (639 aa).

An N-terminal signal peptide occupies residues 1–33 (MQQNIERNQVSMTTSRFVWGAVMALVALGSASA). Positions 36–152 (LNLPDGAALY…TPDQWNGWGA (117 aa)) constitute a Cytochrome c domain. Positions 49, 52, and 53 each coordinate heme.

This sequence belongs to the bacterial PQQ dehydrogenase family. As to quaternary structure, monomer. Requires pyrroloquinoline quinone as cofactor.

The protein resides in the cytoplasm. The enzyme catalyses a polyvinyl alcohol + 2n Fe(III)-[cytochrome c] = an oxidized polyvinyl alcohol + 2n Fe(II)-[cytochrome c] + 2n H(+). Functionally, catalyzes the oxidation of polyvinyl alcohol (PVA) in the polyvinyl alcohol degradation pathway. This is Polyvinylalcohol dehydrogenase (pvaA) from Pseudomonas sp.